A 126-amino-acid chain; its full sequence is Glycine cleavage system H protein (126 aa).

Residues Ala23 to Arg105 form the Lipoyl-binding domain. Lys64 is subject to N6-lipoyllysine.

This sequence belongs to the GcvH family. The glycine cleavage system is composed of four proteins: P, T, L and H. It depends on (R)-lipoate as a cofactor.

In terms of biological role, the glycine cleavage system catalyzes the degradation of glycine. The H protein shuttles the methylamine group of glycine from the P protein to the T protein. The protein is Glycine cleavage system H protein of Rubrobacter xylanophilus (strain DSM 9941 / JCM 11954 / NBRC 16129 / PRD-1).